A 720-amino-acid chain; its full sequence is GTPase-activating protein gyp2 (720 aa).

The GRAM domain maps to 20 to 85; it reads LDPASFFRIN…AAVRKLEREN (66 aa). In terms of domain architecture, Rab-GAP TBC spans 216-404; it reads GIPNNLRADI…RILDCLFVNG (189 aa).

The protein resides in the cytoplasm. The protein localises to the nucleus. Functionally, stimulates specifically the GTPase activity of ypt2 and ryh1. Inactivates ryh1 during recycling between the endosome and the Golgi compartments. This Schizosaccharomyces pombe (strain 972 / ATCC 24843) (Fission yeast) protein is GTPase-activating protein gyp2.